A 167-amino-acid polypeptide reads, in one-letter code: Regulator of sigma D (167 aa).

Belongs to the Rsd/AlgQ family. Interacts with RpoD.

It localises to the cytoplasm. Functionally, binds RpoD and negatively regulates RpoD-mediated transcription activation by preventing the interaction between the primary sigma factor RpoD with the catalytic core of the RNA polymerase and with promoter DNA. May be involved in replacement of the RNA polymerase sigma subunit from RpoD to RpoS during the transition from exponential growth to the stationary phase. This Yersinia enterocolitica serotype O:8 / biotype 1B (strain NCTC 13174 / 8081) protein is Regulator of sigma D.